The sequence spans 361 residues: Phenylalanine--tRNA ligase alpha subunit (361 aa).

Position 260 (E260) interacts with Mg(2+).

It belongs to the class-II aminoacyl-tRNA synthetase family. Phe-tRNA synthetase alpha subunit type 1 subfamily. As to quaternary structure, tetramer of two alpha and two beta subunits. Mg(2+) is required as a cofactor.

It is found in the cytoplasm. It carries out the reaction tRNA(Phe) + L-phenylalanine + ATP = L-phenylalanyl-tRNA(Phe) + AMP + diphosphate + H(+). This Bartonella henselae (strain ATCC 49882 / DSM 28221 / CCUG 30454 / Houston 1) (Rochalimaea henselae) protein is Phenylalanine--tRNA ligase alpha subunit.